We begin with the raw amino-acid sequence, 434 residues long: Ribosomal protein uS12 methylthiotransferase RimO (434 aa).

The 119-residue stretch at 4-122 folds into the MTTase N-terminal domain; the sequence is NRVDVITLGC…LISHLGKSYY (119 aa). Positions 13, 51, 85, 146, 150, and 153 each coordinate [4Fe-4S] cluster. Positions 132–363 constitute a Radical SAM core domain; the sequence is TTPRHYAYLK…MAVQERISAA (232 aa). Residues 366–434 enclose the TRAM domain; the sequence is EAKIGSRLHV…PFDLYARIVD (69 aa).

The protein belongs to the methylthiotransferase family. RimO subfamily. Requires [4Fe-4S] cluster as cofactor.

It localises to the cytoplasm. The catalysed reaction is L-aspartate(89)-[ribosomal protein uS12]-hydrogen + (sulfur carrier)-SH + AH2 + 2 S-adenosyl-L-methionine = 3-methylsulfanyl-L-aspartate(89)-[ribosomal protein uS12]-hydrogen + (sulfur carrier)-H + 5'-deoxyadenosine + L-methionine + A + S-adenosyl-L-homocysteine + 2 H(+). In terms of biological role, catalyzes the methylthiolation of an aspartic acid residue of ribosomal protein uS12. The polypeptide is Ribosomal protein uS12 methylthiotransferase RimO (Porphyromonas gingivalis (strain ATCC BAA-308 / W83)).